The sequence spans 622 residues: DNA mismatch repair protein MutL (622 aa).

Belongs to the DNA mismatch repair MutL/HexB family.

In terms of biological role, this protein is involved in the repair of mismatches in DNA. It is required for dam-dependent methyl-directed DNA mismatch repair. May act as a 'molecular matchmaker', a protein that promotes the formation of a stable complex between two or more DNA-binding proteins in an ATP-dependent manner without itself being part of a final effector complex. In Phenylobacterium zucineum (strain HLK1), this protein is DNA mismatch repair protein MutL.